The sequence spans 267 residues: DNA repair protein RecO (267 aa).

The protein belongs to the RecO family.

In terms of biological role, involved in DNA repair and RecF pathway recombination. The protein is DNA repair protein RecO of Prochlorococcus marinus (strain MIT 9303).